Here is a 512-residue protein sequence, read N- to C-terminus: tRNA-guanine(15) transglycosylase (512 aa).

Catalysis depends on aspartate 85, which acts as the Nucleophile. Aspartate 120 contacts substrate. Zn(2+) is bound by residues cysteine 272, cysteine 274, and cysteine 277.

This sequence belongs to the archaeosine tRNA-ribosyltransferase family. Zn(2+) serves as cofactor.

The enzyme catalyses guanosine(15) in tRNA + 7-cyano-7-deazaguanine = 7-cyano-7-carbaguanosine(15) in tRNA + guanine. Its pathway is tRNA modification; archaeosine-tRNA biosynthesis. Its function is as follows. Exchanges the guanine residue with 7-cyano-7-deazaguanine (preQ0) at position 15 in the dihydrouridine loop (D-loop) of archaeal tRNAs. This chain is tRNA-guanine(15) transglycosylase, found in Aeropyrum pernix (strain ATCC 700893 / DSM 11879 / JCM 9820 / NBRC 100138 / K1).